The primary structure comprises 119 residues: Ribosome-binding factor A (119 aa).

This sequence belongs to the RbfA family. Monomer. Binds 30S ribosomal subunits, but not 50S ribosomal subunits or 70S ribosomes.

The protein resides in the cytoplasm. One of several proteins that assist in the late maturation steps of the functional core of the 30S ribosomal subunit. Associates with free 30S ribosomal subunits (but not with 30S subunits that are part of 70S ribosomes or polysomes). Required for efficient processing of 16S rRNA. May interact with the 5'-terminal helix region of 16S rRNA. The polypeptide is Ribosome-binding factor A (Wolinella succinogenes (strain ATCC 29543 / DSM 1740 / CCUG 13145 / JCM 31913 / LMG 7466 / NCTC 11488 / FDC 602W) (Vibrio succinogenes)).